The sequence spans 404 residues: Adenosylhomocysteinase (404 aa).

Residues aspartate 114 and glutamate 139 each coordinate substrate. 140–142 contributes to the NAD(+) binding site; it reads TTT. 2 residues coordinate substrate: lysine 169 and aspartate 173. Residues asparagine 174, 203-208, glutamate 226, asparagine 261, 282-284, and asparagine 329 each bind NAD(+); these read GYGWCG and AGH.

The protein belongs to the adenosylhomocysteinase family. NAD(+) is required as a cofactor.

Its subcellular location is the cytoplasm. It catalyses the reaction S-adenosyl-L-homocysteine + H2O = L-homocysteine + adenosine. The protein operates within amino-acid biosynthesis; L-homocysteine biosynthesis; L-homocysteine from S-adenosyl-L-homocysteine: step 1/1. May play a key role in the regulation of the intracellular concentration of adenosylhomocysteine. In Thermotoga maritima (strain ATCC 43589 / DSM 3109 / JCM 10099 / NBRC 100826 / MSB8), this protein is Adenosylhomocysteinase.